The sequence spans 1969 residues: TP53-binding protein 1 (1969 aa).

Residues 1–24 form a disordered region; that stretch reads MPGEQMDPTGSQLDSDFSQQDTPC. The span at 8–22 shows a compositional bias: polar residues; sequence PTGSQLDSDFSQQDT. Phosphoserine is present on residues Ser-30, Ser-68, and Ser-73. Residues 67 to 168 form a disordered region; sequence VSNPEQSAVE…DSLAAEDSAS (102 aa). A compositionally biased stretch (polar residues) spans 69–85; it reads NPEQSAVEQGDSNSSFN. Positions 86–95 are enriched in basic and acidic residues; the sequence is EHLKEKKASD. Residues 101–110 show a composition bias toward polar residues; sequence HLGTSGSISQ. Ser-109 carries the post-translational modification Phosphoserine. Residues 135–148 are compositionally biased toward acidic residues; sequence PEEEKEEEELEEEK. The segment covering 158-168 has biased composition (low complexity); sequence ADSLAAEDSAS. Ser-169, Ser-179, and Ser-181 each carry phosphoserine. A Glycyl lysine isopeptide (Lys-Gly) (interchain with G-Cter in SUMO1); alternate cross-link involves residue Lys-220. Lys-220 participates in a covalent cross-link: Glycyl lysine isopeptide (Lys-Gly) (interchain with G-Cter in SUMO2); alternate. Disordered stretches follow at residues 254-337, 352-599, and 614-707; these read EQNL…VSTP, LVQE…CKGR, and DSGS…CPEA. 2 positions are modified to phosphoserine: Ser-267 and Ser-268. Positions 277–288 are enriched in basic and acidic residues; that stretch reads ETKEQVPARELL. Over residues 294-324 the composition is skewed to polar residues; sequence VQPSSEPEVSSTQEDLFDQSSKTASDGCSTP. Ser-297 carries the post-translational modification Phosphoserine. Thr-305 is subject to Phosphothreonine. Phosphoserine occurs at positions 368, 382, and 397. Over residues 407 to 419 the composition is skewed to basic and acidic residues; it reads QKLHDDEAMETEK. Positions 426 to 442 are enriched in polar residues; the sequence is PAVSPQASTPVSRSTPV. Ser-429, Ser-452, and Ser-464 each carry phosphoserine. Polar residues predominate over residues 481 to 490; that stretch reads HSSSLTVECS. The span at 491 to 501 shows a compositional bias: basic and acidic residues; the sequence is KTSESEPKNFT. Ser-507, Ser-518, Ser-523, and Ser-525 each carry phosphoserine. Polar residues predominate over residues 517–528; sequence LSTSEYSQSSKM. 2 positions are modified to phosphothreonine: Thr-543 and Thr-548. Residues Ser-552 and Ser-579 each carry the phosphoserine modification. The segment covering 566–582 has biased composition (polar residues); the sequence is VLVTPSQDDQVEMSQNV. Residues 583–599 show a composition bias toward basic and acidic residues; sequence DKAKEDETEDRGDCKGR. Positions 614-634 are enriched in polar residues; the sequence is DSGSQAVPSPATRSEALSSVL. Residues Ser-622, Ser-627, Ser-631, and Ser-632 each carry the phosphoserine modification. A compositionally biased stretch (basic and acidic residues) spans 640–649; the sequence is MDTKEHHPEE. The residue at position 662 (Thr-662) is a Phosphothreonine. Residues 666 to 675 show a composition bias toward basic and acidic residues; sequence SHREEPKEEP. 4 positions are modified to phosphoserine: Ser-684, Ser-716, Ser-719, and Ser-763. The segment at 754-870 is disordered; sequence KEPSPRADVS…DDKQLGPEGA (117 aa). Residues 790-818 show a composition bias toward basic and acidic residues; sequence AENRLDTPEEKRIECDGDSKAETTEKDAV. A Phosphoserine modification is found at Ser-822. Residues 830–839 are compositionally biased toward basic and acidic residues; it reads VRDEPVRPDQ. A Phosphothreonine modification is found at Thr-912. Lys-920 participates in a covalent cross-link: Glycyl lysine isopeptide (Lys-Gly) (interchain with G-Cter in SUMO2). The segment at 927–1017 is disordered; the sequence is STPIGISNYP…GSTAIAEPVA (91 aa). Positions 935–949 are enriched in polar residues; that stretch reads YPESTIATSDVTSES. Residues 961-975 show a composition bias toward basic and acidic residues; that stretch reads EKGDSESAPEMDGKL. Ser-965 bears the Phosphoserine mark. Residue Lys-974 forms a Glycyl lysine isopeptide (Lys-Gly) (interchain with G-Cter in SUMO2) linkage. Ser-1018 is modified (phosphoserine). 3 disordered regions span residues 1034-1144, 1178-1231, and 1267-1478; these read QEKE…MDRP, GTST…PHGH, and TEET…DSSS. Residues 1060–1074 are compositionally biased toward basic and acidic residues; that stretch reads EEDKERPDVTPKLRQ. 2 positions are modified to phosphoserine: Ser-1075 and Ser-1096. Low complexity predominate over residues 1099 to 1112; it reads SQQRASQEQRASQE. Ser-1115 carries the post-translational modification Phosphoserine. Over residues 1178-1197 the composition is skewed to polar residues; the sequence is GTSTAEQNSGKQDATVQTER. Phosphothreonine is present on Thr-1211. A phosphoserine mark is found at Ser-1213 and Ser-1216. Positions 1269 to 1282 are enriched in acidic residues; that stretch reads ETEEPIVECQECET. A compositionally biased stretch (low complexity) spans 1295-1326; that stretch reads DLGDISSFSSKASSSHHTSSGTSLSAIHSSGS. Phosphoserine is present on Ser-1314. Arg-1329 carries the omega-N-methylarginine modification. Ser-1339 carries the post-translational modification Phosphoserine. Position 1352 is an omega-N-methylarginine (Arg-1352). Ser-1359 bears the Phosphoserine mark. Lys-1362 is covalently cross-linked (Glycyl lysine isopeptide (Lys-Gly) (interchain with G-Cter in SUMO2)). Ser-1365 is subject to Phosphoserine. Positions 1393 to 1400 match the GAR motif; sequence RGRGRRGR. Phosphoserine is present on residues Ser-1423 and Ser-1427. Lys-1431 participates in a covalent cross-link: Glycyl lysine isopeptide (Lys-Gly) (interchain with G-Cter in SUMO1); alternate. Lys-1431 participates in a covalent cross-link: Glycyl lysine isopeptide (Lys-Gly) (interchain with G-Cter in SUMO2); alternate. Ser-1457, Ser-1459, Ser-1470, and Ser-1471 each carry phosphoserine. The segment covering 1469-1478 has biased composition (low complexity); sequence GSSDGLDSSS. Residues 1481 to 1600 form a tudor-like region; it reads NSFVGLRVVA…NRLREQYGLG (120 aa). Residues 1492–1520 form an interaction with dimethylated histone H4 region; it reads WSSNGYFYSGKITRDVGAGKYKLLFDDGY. A Glycyl lysine isopeptide (Lys-Gly) (interchain with G-Cter in SUMO1); alternate cross-link involves residue Lys-1560. A Glycyl lysine isopeptide (Lys-Gly) (interchain with G-Cter in SUMO2); alternate cross-link involves residue Lys-1560. A UDR motif is present at residues 1601–1628; that stretch reads PYEAVTPLTKAADISLDNLVEGKRKRRS. Position 1606 is a phosphothreonine (Thr-1606). A phosphoserine mark is found at Ser-1615, Ser-1628, and Ser-1632. The tract at residues 1624–1715 is disordered; it reads RKRRSNISSP…IGEPSVLEEP (92 aa). Over residues 1631-1648 the composition is skewed to low complexity; sequence SSPVTPTAASSSSTTPTR. Phosphothreonine occurs at positions 1635 and 1645. Ser-1653, Ser-1670, and Ser-1675 each carry phosphoserine. A Glycyl lysine isopeptide (Lys-Gly) (interchain with G-Cter in ubiquitin) cross-link involves residue Lys-1682. Phosphoserine occurs at positions 1698 and 1756. BRCT domains lie at 1749-1845 and 1861-1961; these read LDGP…NYLL and PREN…QHPK.

Homoligomer. Interacts with p53/TP53 (via the central domain). Interacts with DCLRE1C. Interacts with histone H2AX and this requires phosphorylation of H2AX on 'Ser-139'. Interacts with histone H4 that has been dimethylated at 'Lys-20' (H4K20me2). Has low affinity for histone H4 containing monomethylated 'Lys-20' (H4K20me1). Does not bind histone H4 containing unmethylated or trimethylated 'Lys-20' (H4K20me3). Has low affinity for histone H3 that has been dimethylated on 'Lys-79'. Has very low affinity for histone H3 that has been monomethylated on 'Lys-79' (in vitro). Does not bind unmethylated histone H3. Interacts with histone H2A monoubiquitinated at 'Lys-15' (H2AK15Ub). Interacts with PWWP3A/EXPAND1. Interacts with CHEK2; modulates CHEK2 phosphorylation at 'Thr-68' in response to infrared. Interacts with MSL1; this interaction may be required for MSL1 DNA repair activity, but not for histone acetyltransferase activity. Interacts (when phosphorylated by ATM) with RIF1. Interacts (via the Tudor-like domain) with NUDT16L1/TIRR; interaction masks the Tudor-like domain and prevents recruitment to chromatin. Interacts with PAXIP1. Interacts with IFI202A. Interacts with SHLD2. Interacts (when phosphorylated) with TOPBP1. Interacts with GFI1; promoting methylation by PRMT1. Interacts with (phosphorylated) DYNLL1; specifically binds DYNLL1 phosphorylated at 'Ser-88' and promotes its recruitment to double stand breaks (DSBs). Phosphorylated at basal level in the absence of DNA damage. Phosphorylated by ATM in response to DNA damage: phosphorylation at different sites promotes interaction with different set of proteins: phosphorylation at the N-terminus by ATM (residues from 11-181) promotes interaction with PAXIP1 and non-homologous end joining (NHEJ) of dysfunctional telomeres. Phosphorylation by ATM at residues that are located more C-terminus (residues 300-650) leads to promote interaction with RIF1. Interaction with RIF1 leads to disrupt interaction with NUDT16L1/TIRR. Phosphorylation at Thr-1606 and Ser-1615 in the UDR motif blocks interaction with H2AK15ub. Dephosphorylated by PPP4C. Hyperphosphorylation during mitosis correlates with its exclusion from chromatin and DNA lesions. Hyperphosphorylated in an ATR-dependent manner in response to DNA damage induced by UV irradiation. Dephosphorylated by PPP5C. Phosphorylation at Ser-368 and Thr-662 promotes interaction with TOPBP1. Phosphorylated by VRK1. Post-translationally, asymmetrically dimethylated on Arg residues by PRMT1. Methylation is required for DNA binding. In terms of processing, monoubiquitinated at Lys-1682 by MSL2 is reponse to DNA damage, leading to its stabilization.

It localises to the nucleus. The protein localises to the chromosome. It is found in the centromere. The protein resides in the kinetochore. Its function is as follows. Double-strand break (DSB) repair protein involved in response to DNA damage, telomere dynamics and class-switch recombination (CSR) during antibody genesis. Plays a key role in the repair of double-strand DNA breaks (DSBs) in response to DNA damage by promoting non-homologous end joining (NHEJ)-mediated repair of DSBs and specifically counteracting the function of the homologous recombination (HR) repair protein BRCA1. In response to DSBs, phosphorylation by ATM promotes interaction with RIF1 and dissociation from NUDT16L1/TIRR, leading to recruitment to DSBs sites. Recruited to DSBs sites by recognizing and binding histone H2A monoubiquitinated at 'Lys-15' (H2AK15Ub) and histone H4 dimethylated at 'Lys-20' (H4K20me2), two histone marks that are present at DSBs sites. Required for immunoglobulin class-switch recombination (CSR) during antibody genesis, a process that involves the generation of DNA DSBs. Participates in the repair and the orientation of the broken DNA ends during CSR. In contrast, it is not required for classic NHEJ and V(D)J recombination. Promotes NHEJ of dysfunctional telomeres. The protein is TP53-binding protein 1 of Mus musculus (Mouse).